The chain runs to 88 residues: Conotoxin VxVIB (88 aa).

Positions 1–22 are cleaved as a signal peptide; that stretch reads MNLACVLIVAVLFLTASQLATA. Residues 23-52 constitute a propeptide that is removed on maturation; sequence ASYARDKQEYPAVRSSDEMQDSEDLTLTKE. 3 disulfide bridges follow: C53-C68, C60-C72, and C67-C81.

Expressed by the venom duct.

It localises to the secreted. In terms of biological role, may act as a neurotoxin, but produces no obvious effect on ionic currents when tested on the mouse dorsal rooted ganglia (DRG). The sequence is that of Conotoxin VxVIB from Conus vexillum (Flag cone).